Here is a 649-residue protein sequence, read N- to C-terminus: uncharacterized protein (649 aa).

The protein localises to the nucleus. Its subcellular location is the cytoplasm. This is an uncharacterized protein from Schizosaccharomyces pombe (strain 972 / ATCC 24843) (Fission yeast).